Reading from the N-terminus, the 477-residue chain is Tripartite motif-containing protein 72 (477 aa).

The Zn(2+) site is built by Leu-14, Pro-17, Pro-29, Cys-31, Thr-34, Gln-37, Thr-53, Pro-56, Gly-86, Leu-89, Val-97, Glu-100, Leu-105, Gly-108, Gly-114, and Lys-117. Residues 16–59 form an RING-type zinc finger; it reads CPLCLELFRAPVTPECGHTFCQGCLTGAPKNQDQNGSTPCPTCQ. The B box-type zinc finger occupies 83–124; the sequence is VPKGHCLEHLDPLSVYCEQDKELICGVCASLGKHKGHNIITA. A coiled-coil region spans residues 135–232; it reads LPQQQVILQE…QMDGVLKDVE (98 aa). In terms of domain architecture, B30.2/SPRY spans 272-476; it reads DEFKFQVWRK…LKIFYPPAEQ (205 aa).

This sequence belongs to the TRIM/RBCC family. Homodimer. Homooligomer; disulfide-linked. Oligomerizes on the phospholipid membrane. Post-translationally, disulfide bond formation at Cys-244 occurs in case of membrane damage that cause the entry of the oxidized milieu of the extracellular space, resulting in homooligomerization.

It is found in the cell membrane. It localises to the sarcolemma. The protein localises to the cytoplasmic vesicle membrane. It catalyses the reaction S-ubiquitinyl-[E2 ubiquitin-conjugating enzyme]-L-cysteine + [acceptor protein]-L-lysine = [E2 ubiquitin-conjugating enzyme]-L-cysteine + N(6)-ubiquitinyl-[acceptor protein]-L-lysine.. It participates in protein modification; protein ubiquitination. With respect to regulation, specifically binds phosphatidylserine. The binding to phospholipids enhances ubiquitination activity. Its function is as follows. Muscle-specific E3 ubiquitin-protein ligase that plays a central role in cell membrane repair by nucleating the assembly of the repair machinery at injury sites. Acts as a sensor of oxidation: upon membrane damage, entry of extracellular oxidative environment results in disulfide bond formation and homooligomerization at the injury site. This oligomerization acts as a nucleation site for recruitment of TRIM72-containing vesicles to the injury site, leading to membrane patch formation. Probably acts upstream of the Ca(2+)-dependent membrane resealing process. Required for transport of DYSF to sites of cell injury during repair patch formation. Regulates membrane budding and exocytosis. May be involved in the regulation of the mobility of KCNB1-containing endocytic vesicles. The protein is Tripartite motif-containing protein 72 (trim72) of Xenopus tropicalis (Western clawed frog).